Here is a 958-residue protein sequence, read N- to C-terminus: DNA repair and recombination protein RDH54 (958 aa).

A disordered region spans residues 189–217; that stretch reads EALSQNMGNPSPPTTSTTETVPSTKNDGG. Residues 202–212 show a composition bias toward low complexity; the sequence is TTSTTETVPST. The 189-residue stretch at 333-521 folds into the Helicase ATP-binding domain; sequence LENDSDISGC…FTIIDFINPG (189 aa). 380-387 contacts ATP; it reads IPLTGLCK. A DEGH box motif is present at residues 506–509; that stretch reads NDLN. Residue Lys649 forms a Glycyl lysine isopeptide (Lys-Gly) (interchain with G-Cter in ubiquitin) linkage. The Helicase C-terminal domain maps to 665–824; sequence KLKVLMTLLE…DSEMRNKESS (160 aa).

The protein belongs to the SNF2/RAD54 helicase family. As to quaternary structure, interacts with RAD51 and DMC1.

The protein localises to the nucleus. The catalysed reaction is ATP + H2O = ADP + phosphate + H(+). In terms of biological role, involved in the recombinational repair of double-strand breaks (DSB) in DNA during mitosis and meiosis. Has DNA dependent ATPase activity. Promotes D-loop (displacement loop) formation with RAD51 recombinase. Modifies the topology of double-stranded DNA during the D-loop reaction to facilitate the invasion of the homologous duplex molecule by the initiating single-stranded DNA substrate. Required for adaptation from G2/M checkpoint arrest induced by a double strand break, by participating in monitoring the extent of single-stranded DNA produced by resection of DNA ends. This role is distinct from its roles in recombination. Promotes colocalization of RAD51 and DMC1 during meiotic recombination. Involved in crossover interference. This is DNA repair and recombination protein RDH54 (RDH54) from Saccharomyces cerevisiae (strain ATCC 204508 / S288c) (Baker's yeast).